The chain runs to 209 residues: Large ribosomal subunit protein bL21m (209 aa).

A mitochondrion-targeting transit peptide spans 1–43 (MAAAIAASALPGAFGRLVSVCSRSILASQGSGSASLWSASRRF).

This sequence belongs to the bacterial ribosomal protein bL21 family. In terms of assembly, component of the mitochondrial ribosome large subunit (39S) which comprises a 16S rRNA and about 50 distinct proteins.

The protein resides in the mitochondrion. The protein is Large ribosomal subunit protein bL21m (Mrpl21) of Mus musculus (Mouse).